The primary structure comprises 290 residues: Endonuclease 2 (290 aa).

The signal sequence occupies residues 1–27 (MANQKGLHVVMMIITVWLLYAAPNIHG). Tryptophan 28 and histidine 33 together coordinate a divalent metal cation. Residue 28 to 33 (WGKEGH) coordinates substrate. The cysteines at positions 37 and 68 are disulfide-linked. Residues aspartate 72 and histidine 85 each contribute to the a divalent metal cation site. Residues 72–76 (DRVKF), 85–88 (HYIN), and 94–99 (SYQYNR) each bind substrate. Intrachain disulfides connect cysteine 93-cysteine 245, cysteine 101-cysteine 111, and cysteine 226-cysteine 232. Positions 118 and 136 each coordinate substrate. Asparagine 118 carries an N-linked (GlcNAc...) asparagine glycan. Asparagine 137 is a glycosylation site (N-linked (GlcNAc...) asparagine). A divalent metal cation-binding residues include histidine 147, aspartate 151, histidine 157, histidine 181, and aspartate 185. Residues 147-196 (HFMGDIHQPLHVSYASDKGGNTIEVHWYTRKANLHHIWDSNIIETAEADL) form a substrate binding region. Residue asparagine 211 is glycosylated (N-linked (GlcNAc...) asparagine). A propeptide spans 283–290 (ATLNRIFG) (removed in mature form).

It belongs to the nuclease type I family. As to quaternary structure, monomer. The cofactor is Mn(2+). Ca(2+) is required as a cofactor. It depends on Zn(2+) as a cofactor. Post-translationally, N-glycosylation is required for enzymatic stability and activity.

It carries out the reaction Endonucleolytic cleavage to 5'-phosphomononucleotide and 5'-phosphooligonucleotide end-products.. With respect to regulation, ssDNase activity is inhibited by the divalent cation chelator EDTA and the reducing agent DTT. Divalent metal ions (e.g. Ca(2+), Mg(2+) and Zn(2+)) and DTT represses RNase activity. RNase activity is enhanced by EDTA. Also repressed by vanadate (VO(4)(3-)) and phosphate (PO(4)(3-)) by occupying the active site. In terms of biological role, endonuclease mostly active on RNA and ssDNA, and to a lower extent, on dsDNA. Can cleave mismatch regions in heteroduplex DNA containing single base pair mismatches or insertion/deletion bases. In contradiction with PubMed:22506810, cannot hydrolyze single-stranded DNA and does not cleave mismatches. This Arabidopsis thaliana (Mouse-ear cress) protein is Endonuclease 2.